A 338-amino-acid polypeptide reads, in one-letter code: MSASGLPFDDFRALLRNLPGPDTAALVAARERDGQLTKPPGALGRLEEIAFWLAAWTGRPPAVNRPLVAIFAGNHGVTRQGVTPFPASVTAQMVENFAAGGAAINQICVAHDLGLKVFDLALDYPTGDITEEPALSERDCAATMAFGMEAIAGGTDLLCIGEMGIGNTTIAAAINLGLYGGTAEEWVGPGTGSEGEVLKRKIAAVKKAVALHRDHLSDPLEVMRRLGGREIAAMAGAILAARMQKVPVIIDGYVATAAAAILKAANPAALDHCLIGHVSSEPGHMRAIEKLGKTPLLALGMRLGEGTGAALAAGIVKAAAACHSGMATFAQAGVSNKV.

Residue Glu-305 is the Proton acceptor of the active site.

This sequence belongs to the CobT family.

The catalysed reaction is 5,6-dimethylbenzimidazole + nicotinate beta-D-ribonucleotide = alpha-ribazole 5'-phosphate + nicotinate + H(+). Its pathway is nucleoside biosynthesis; alpha-ribazole biosynthesis; alpha-ribazole from 5,6-dimethylbenzimidazole: step 1/2. In terms of biological role, catalyzes the synthesis of alpha-ribazole-5'-phosphate from nicotinate mononucleotide (NAMN) and 5,6-dimethylbenzimidazole (DMB). This Sinorhizobium medicae (strain WSM419) (Ensifer medicae) protein is Nicotinate-nucleotide--dimethylbenzimidazole phosphoribosyltransferase.